The chain runs to 914 residues: Translation initiation factor IF-2 (914 aa).

The segment at 58 to 160 is disordered; it reads KTEKKQTAKK…EAEPKIEVMP (103 aa). Residues 70–91 are compositionally biased toward basic and acidic residues; sequence KKDTVKKDTVKKTAVKKDDSKA. Positions 92-103 are enriched in basic residues; that stretch reads AKKTKPIAKKSA. Over residues 104–160 the composition is skewed to basic and acidic residues; it reads PKTEKKVEKKVESKISKPDNEILEAKPEISKPEIKAEPKKEEIEQKQEAEPKIEVMP. Residues 413-582 form the tr-type G domain; it reads ERVPVITIMG…LLQADLLELK (170 aa). Residues 422–429 are G1; that stretch reads GHVDHGKT. 422–429 contributes to the GTP binding site; it reads GHVDHGKT. Residues 447 to 451 are G2; it reads GITQH. The segment at 468–471 is G3; the sequence is DTPG. Residues 468–472 and 522–525 each bind GTP; these read DTPGH and NKMD. Residues 522–525 are G4; it reads NKMD. Positions 558-560 are G5; sequence SAK.

This sequence belongs to the TRAFAC class translation factor GTPase superfamily. Classic translation factor GTPase family. IF-2 subfamily.

Its subcellular location is the cytoplasm. Its function is as follows. One of the essential components for the initiation of protein synthesis. Protects formylmethionyl-tRNA from spontaneous hydrolysis and promotes its binding to the 30S ribosomal subunits. Also involved in the hydrolysis of GTP during the formation of the 70S ribosomal complex. In Campylobacter hominis (strain ATCC BAA-381 / DSM 21671 / CCUG 45161 / LMG 19568 / NCTC 13146 / CH001A), this protein is Translation initiation factor IF-2.